Consider the following 499-residue polypeptide: Probable malate:quinone oxidoreductase (499 aa).

The protein belongs to the MQO family. FAD serves as cofactor.

The enzyme catalyses (S)-malate + a quinone = a quinol + oxaloacetate. Its pathway is carbohydrate metabolism; tricarboxylic acid cycle; oxaloacetate from (S)-malate (quinone route): step 1/1. This Exiguobacterium sp. (strain ATCC BAA-1283 / AT1b) protein is Probable malate:quinone oxidoreductase.